The sequence spans 50 residues: MISMLRCTFFFLSVILITSYFVTPTMSIKCNCKRHVIKPHICRKICGKNG.

A signal peptide spans 1–27 (MISMLRCTFFFLSVILITSYFVTPTMS). Lys29 is modified (N6-formyllysine; partial). Disulfide bonds link Cys30-Cys42 and Cys32-Cys46. N6-formyllysine; partial is present on residues Lys44 and Lys48. Residue Asn49 is modified to Asparagine amide.

Expressed by the venom gland.

Its subcellular location is the secreted. Functionally, potent anti-inflammatory agent. At low concentrations, mediates the degranulation of mast cells thus evoking an inflammatory response. Also acts as a neurotoxin capable of blocking a class of voltage-gated potassium channels. This is Mast cell degranulating peptide from Apis mellifera (Honeybee).